The primary structure comprises 177 residues: ATP synthase subunit delta (177 aa).

Belongs to the ATPase delta chain family. In terms of assembly, F-type ATPases have 2 components, F(1) - the catalytic core - and F(0) - the membrane proton channel. F(1) has five subunits: alpha(3), beta(3), gamma(1), delta(1), epsilon(1). F(0) has three main subunits: a(1), b(2) and c(10-14). The alpha and beta chains form an alternating ring which encloses part of the gamma chain. F(1) is attached to F(0) by a central stalk formed by the gamma and epsilon chains, while a peripheral stalk is formed by the delta and b chains.

Its subcellular location is the cell membrane. In terms of biological role, f(1)F(0) ATP synthase produces ATP from ADP in the presence of a proton or sodium gradient. F-type ATPases consist of two structural domains, F(1) containing the extramembraneous catalytic core and F(0) containing the membrane proton channel, linked together by a central stalk and a peripheral stalk. During catalysis, ATP synthesis in the catalytic domain of F(1) is coupled via a rotary mechanism of the central stalk subunits to proton translocation. This protein is part of the stalk that links CF(0) to CF(1). It either transmits conformational changes from CF(0) to CF(1) or is implicated in proton conduction. The protein is ATP synthase subunit delta of Caldanaerobacter subterraneus subsp. tengcongensis (strain DSM 15242 / JCM 11007 / NBRC 100824 / MB4) (Thermoanaerobacter tengcongensis).